The primary structure comprises 142 residues: Universal stress protein G (142 aa).

This sequence belongs to the universal stress protein A family.

This is Universal stress protein G (uspG) from Escherichia coli O157:H7.